A 1641-amino-acid chain; its full sequence is Histone-lysine N-methyltransferase SETD1 (1641 aa).

A disordered region spans residues 1-23; that stretch reads MQDVRNINLVNNSSNSHDSSLAN. The span at 8-23 shows a compositional bias: low complexity; it reads NLVNNSSNSHDSSLAN. The region spanning 101–179 is the RRM domain; the sequence is VEVTIVNLND…KILDVFCDPF (79 aa). 6 disordered regions span residues 236-384, 537-596, 831-915, 930-949, 1119-1155, and 1205-1226; these read YTTQ…IDQR, APPF…SDEE, RIRK…SSSS, KARTSEEDSPRGYGQRNLNQ, QEKRIEKSLDKNLQSPNNIVKNNNSPRNKNDETRKTA, and NSKGKTKRTQSPVYSEGGSSQA. A compositionally biased stretch (basic and acidic residues) spans 244–284; sequence IPNRSRDRNWNRDKERERDRHFKERSRHSSERSYDRDRGMR. The segment covering 291-300 has biased composition (basic residues); it reads IRRRRTFYRR. Composition is skewed to basic and acidic residues over residues 308 to 341 and 349 to 384; these read EDSRDILIMTRERSRDSDSRPRDYCRSRERESFR and KGRDQPREKREHYYNSSKDREYRGRDRDRSAEIDQR. Positions 556–568 are enriched in low complexity; sequence EVFSDVNSDSNNS. Basic and acidic residues-rich tracts occupy residues 569–579 and 844–867; these read ENKKRSCEKNN and NFLERDLSDQEEMVQRSDSDKEDS. Positions 904-915 are enriched in low complexity; that stretch reads SASSFFSSSSSS. Basic and acidic residues-rich tracts occupy residues 930–939 and 1119–1128; these read KARTSEEDSP and QEKRIEKSLD. Residues 1091 to 1132 adopt a coiled-coil conformation; sequence SEEEKEYQERRKRNTEYMAQMEREFLEEQEKRIEKSLDKNLQ. 2 stretches are compositionally biased toward polar residues: residues 1129–1145 and 1205–1217; these read KNLQSPNNIVKNNNSPR and NSKGKTKRTQSPV. Residues 1473–1478 carry the RxxxRR motif motif; that stretch reads RSNQRR. The 118-residue stretch at 1502–1619 folds into the SET domain; it reads KQLKFAKSAI…INEEITYDYK (118 aa). Position 1618 (Tyr1618) interacts with S-adenosyl-L-methionine. Residues 1625–1641 form the Post-SET domain; it reads EKIPCLCGAQGCRGTLN.

This sequence belongs to the class V-like SAM-binding methyltransferase superfamily. In terms of assembly, component of the Set1C/COMPASS complex, composed at least of the catalytic subunit Set1, wds/WDR5, Wdr82, Rbbp5, ash2, Cfp1/CXXC1, hcf and Dpy-30L1.

The protein localises to the nucleus. Its subcellular location is the chromosome. The enzyme catalyses L-lysyl(4)-[histone H3] + 3 S-adenosyl-L-methionine = N(6),N(6),N(6)-trimethyl-L-lysyl(4)-[histone H3] + 3 S-adenosyl-L-homocysteine + 3 H(+). It carries out the reaction N(6)-methyl-L-lysyl(4)-[histone H3] + S-adenosyl-L-methionine = N(6),N(6)-dimethyl-L-lysyl(4)-[histone H3] + S-adenosyl-L-homocysteine + H(+). The catalysed reaction is N(6),N(6)-dimethyl-L-lysyl(4)-[histone H3] + S-adenosyl-L-methionine = N(6),N(6),N(6)-trimethyl-L-lysyl(4)-[histone H3] + S-adenosyl-L-homocysteine + H(+). In terms of biological role, catalytic component of the COMPASS (Set1C) complex that specifically mono-, di- and trimethylates histone H3 to form H3K4me1/2/3. Binds RNAs which might negatively affect its histone methyltransferase activity. COMPASS recognizes ubiquitinated H2B on one face of the nucleosome which stimulates the methylation of H3 on the opposing face. Set1-dependent trimethylation regulates chromatin changes at active promoters that ensure optimal RNA polymerase II release into productive elongation, thereby contributing to optimal transcription. The sequence is that of Histone-lysine N-methyltransferase SETD1 from Drosophila melanogaster (Fruit fly).